The sequence spans 63 residues: Acrosin inhibitor 1 (63 aa).

A Kazal-like domain is found at 8–63 (FGFPPDCKVYTEACTREYNPICDSAAKTYSNECTFCNEKMNNDADIHFNHFGECEY). Cystine bridges form between Cys14-Cys43, Cys21-Cys40, and Cys29-Cys61.

As to expression, seminal plasma.

Its subcellular location is the secreted. Its function is as follows. Strong inhibitor of acrosin. This chain is Acrosin inhibitor 1, found in Bos taurus (Bovine).